Here is a 168-residue protein sequence, read N- to C-terminus: Leukotoxin-activating lysine-acyltransferase LtxC (168 aa).

Residues His23 and Asp92 contribute to the active site.

This sequence belongs to the RTX toxin acyltransferase family.

Its subcellular location is the cytoplasm. It carries out the reaction a fatty acyl-[ACP] + L-lysyl-[protein] = N(6)-(fatty acyl)-L-lysyl-[protein] + holo-[ACP] + H(+). Functionally, required for full activity and modification of the LtxA leukotoxin. Involved in fatty acid modification of the protoxin at two internal lysine residues, thereby converting it to the active toxin. In Aggregatibacter actinomycetemcomitans (Actinobacillus actinomycetemcomitans), this protein is Leukotoxin-activating lysine-acyltransferase LtxC.